We begin with the raw amino-acid sequence, 150 residues long: Transcriptional repressor NrdR (150 aa).

A zinc finger lies at 3–34 (CPFCGYEETKVLDSRPVSNGTSIRRRRECLQC). One can recognise an ATP-cone domain in the interval 49-139 (IRIIKKDGRR…VYKEFRDLDS (91 aa)).

It belongs to the NrdR family. Zn(2+) is required as a cofactor.

Its function is as follows. Negatively regulates transcription of bacterial ribonucleotide reductase nrd genes and operons by binding to NrdR-boxes. The polypeptide is Transcriptional repressor NrdR (Petrotoga mobilis (strain DSM 10674 / SJ95)).